A 144-amino-acid chain; its full sequence is Large ribosomal subunit protein uL16 (144 aa).

Positions 1–19 (MLLPKRVKYRRQHRPKTTG) are enriched in basic residues. The segment at 1–23 (MLLPKRVKYRRQHRPKTTGRSKG) is disordered.

The protein belongs to the universal ribosomal protein uL16 family. Part of the 50S ribosomal subunit.

Binds 23S rRNA and is also seen to make contacts with the A and possibly P site tRNAs. The protein is Large ribosomal subunit protein uL16 of Staphylococcus aureus (strain Mu50 / ATCC 700699).